The primary structure comprises 472 residues: Serine incorporator 3 (472 aa).

At 1 to 96 the chain is on the extracellular side; it reads MGAVLGVFSL…KDCDVLVGFK (96 aa). The N-linked (GlcNAc...) asparagine glycan is linked to asparagine 34. Residues 97-117 traverse the membrane as a helical segment; the sequence is AVYRINFAVAIFFFAFFLLML. Topologically, residues 118–132 are cytoplasmic; sequence KVKTSKDPRAAVHNG. A helical membrane pass occupies residues 133–153; it reads FWFFKIAAIIGIMIGSFYIPG. The Extracellular segment spans residues 154-158; that stretch reads GSFTE. Residues 159–179 traverse the membrane as a helical segment; that stretch reads VWFVAGMLGASFFIIIQLVLL. Topologically, residues 180 to 206 are cytoplasmic; it reads VDMAHSWNELWVNRMEEGNPRLWYAAL. Residues 207 to 227 form a helical membrane-spanning segment; the sequence is LSFTSLFYILSIVFAALLYVF. Topologically, residues 228 to 238 are extracellular; the sequence is YTKPDDCTENK. The chain crosses the membrane as a helical span at residues 239 to 259; the sequence is VFISLNLIFCVAVSIVSILPK. The Cytoplasmic segment spans residues 260–329; it reads VQEHQPRSGL…APAYAPPSQS (70 aa). The helical transmembrane segment at 330 to 350 threads the bilayer; the sequence is GHFMNLDDIWGLIIFVFCLIY. Over 351–405 the chain is Extracellular; sequence SSFRTSSNSQVNKLTLSGSDSVILGDTTNGANDEEDGQPRRAVDNEKEGVQYSYS. Serine 371 is modified (phosphoserine). The chain crosses the membrane as a helical span at residues 406-426; sequence FFHLMLCCASLYIMMTITSWY. The Cytoplasmic segment spans residues 427 to 445; that stretch reads SPDAKFQKVSSKWLAVWFK. Residues 446–466 form a helical membrane-spanning segment; sequence MGSSWLCLLLYLWTLVAPLVL. At 467-472 the chain is on the extracellular side; the sequence is TGRDFS.

This sequence belongs to the TDE1 family. N-glycosylated. Highly expressed in the neuronal populations such as Purkinje cells in the cerebellum, brainstem and spinal motor neurons, locus coeruleus and raphe nuclei. Highly expressed also in thymus, kidney liver and testis.

Its subcellular location is the cell membrane. The protein resides in the golgi apparatus membrane. It catalyses the reaction a 1,2-diacyl-sn-glycero-3-phospho-L-serine(in) = a 1,2-diacyl-sn-glycero-3-phospho-L-serine(out). The enzyme catalyses a 1,2-diacyl-sn-glycero-3-phosphocholine(in) = a 1,2-diacyl-sn-glycero-3-phosphocholine(out). It carries out the reaction a 1,2-diacyl-sn-glycero-3-phosphoethanolamine(in) = a 1,2-diacyl-sn-glycero-3-phosphoethanolamine(out). Functionally, restriction factor required to restrict infectivity of gammaretroviruses: acts by inhibiting an early step of viral infection. Impairs the penetration of the viral particle into the cytoplasm. Non-ATP-dependent, non-specific lipid transporter for phosphatidylserine, phosphatidylcholine, and phosphatidylethanolamine. Functions as a scramblase that flips lipids in both directions across the membrane. Phospholipid scrambling results in gammaretroviral surface exposure of phosphatidylserine and loss of membrane asymmetry, which leads to loss of infectivity. This Mus musculus (Mouse) protein is Serine incorporator 3 (Serinc3).